The following is a 397-amino-acid chain: Potassium channel subfamily K member 4 (397 aa).

Topologically, residues 1-3 (MRS) are cytoplasmic. The chain crosses the membrane as a helical span at residues 4–24 (TTLLALLALVLLYLVSGALVF). Topologically, residues 25–88 (QALEQPHEQQ…WTNSSNHSSA (64 aa)) are extracellular. Asn81 carries N-linked (GlcNAc...) asparagine glycosylation. An intramembrane region (helical) is located at residues 89–103 (WNLGSAFFFSGTIIT). K(+) contacts are provided by Thr104, Ile105, Gly106, and Tyr107. A selectivity filter 1 region spans residues 104 to 109 (TIGYGN). Residues 104–110 (TIGYGNI) lie within the membrane without spanning it. At 111–118 (ALHTDAGR) the chain is on the extracellular side. Residues 119 to 151 (LFCIFYALVGIPLFGMLLAGVGDRLGSSLRRGI) traverse the membrane as a helical segment. The Cytoplasmic segment spans residues 152-173 (GHIEAVFLKWHVPPGLVRMLSA). A helical transmembrane segment spans residues 174 to 195 (VLFLLIGCLLFVLTPTFVFSYM). Residues 196–200 (ESWSK) lie on the Extracellular side of the membrane. Residues 201–214 (LEAIYFVIVTLTTV) constitute an intramembrane region (helical). Residues Thr213, Val214, Gly215, and Phe216 each coordinate K(+). The interval 213 to 218 (TVGFGD) is selectivity filter 2. Residues 215-220 (GFGDYV) lie within the membrane without spanning it. The Extracellular segment spans residues 221–234 (PGDGTGQNSPAYQP). The chain crosses the membrane as a helical span at residues 235 to 261 (LVWFWILFGLAYFASVLTTIGNWLRAV). Topologically, residues 262–397 (SRRTRAEMGG…GRLRDKAVPV (136 aa)) are cytoplasmic. The segment covering 282–292 (TVTARVTQRTG) has biased composition (polar residues). A disordered region spans residues 282–397 (TVTARVTQRT…GRLRDKAVPV (116 aa)). The segment covering 369-388 (PRGRRRPNPTKKPSRPRGPG) has biased composition (basic residues).

It belongs to the two pore domain potassium channel (TC 1.A.1.8) family. As to quaternary structure, homodimer; disulfide-linked. Forms heterodimers with other 2-pore domain K(+) channel subunits, such as KCNK2 and KCNK10. Detected in brain, and at much lower levels in liver, skeletal muscle and testis.

Its subcellular location is the cell membrane. It is found in the cell projection. The protein resides in the axon. It carries out the reaction K(+)(in) = K(+)(out). It catalyses the reaction Rb(+)(in) = Rb(+)(out). The catalysed reaction is Cs(+)(in) = Cs(+)(out). Activated by various stimuli including intracellular basic pH, mechanical stretch and heat and polyunsaturated fatty acids such as arachidonic acid. K(+) channel that conducts voltage-dependent outward rectifying currents upon membrane depolarization. Voltage sensing is coupled to K(+) electrochemical gradient in an 'ion flux gating' mode where outward but not inward ion flow opens the gate. Converts to voltage-independent 'leak' conductance mode upon stimulation by various stimuli including mechanical membrane stretch, basic pH, heat and lipids. Homo- and heterodimerizes to form functional channels with distinct regulatory and gating properties. At trigeminal A-beta afferent nerves, the heterodimer of KCNK2/TREK-1 and KCNK4/TRAAK is mostly coexpressed at nodes of Ranvier where it conducts voltage-independent mechanosensitive and thermosensitive currents, allowing rapid action potential repolarization, high speed and high frequence saltatory conduction on myelinated nerves to ensure prompt sensory responses. Permeable to other monovalent cations such as Rb(+) and Cs(+). In Rattus norvegicus (Rat), this protein is Potassium channel subfamily K member 4.